A 320-amino-acid chain; its full sequence is MTYSVSPSSLLTEYGNDNICRVLALDGGGAKGFYTLGVLKEIEAMLGCPLYKRFDLVFGTSTGAIIAALIALGYEVDQIHALYTEHVPRVMSSRSAAARTMALQDLAKEVFQDKTFEDVLMGIGIVATRWMTERPMIFKGNVVQAHGRKGTFSPGFGVSIADAVQASCSAYPFFERKVIVTAAGDKVELIDGGYCANNPTLFAIADATVALKKDHKDIRVINVGVGIYPEPKPGLLMRIAKKWLAVQLLQKTLEINTQSMDQLRDILFKDIPTIRISDTFERPEMATDLLEYNLDKLNTLRQRGRESFGAREAQLREFLI.

One can recognise a PNPLA domain in the interval 23-204 (LALDGGGAKG…CANNPTLFAI (182 aa)). The short motif at 27-32 (GGGAKG) is the GXGXXG element. The short motif at 59–63 (GTSTG) is the GXSXG element. The Nucleophile role is filled by Ser-61. Asp-191 (proton acceptor) is an active-site residue. Positions 191–193 (DGG) match the DGA/G motif.

Belongs to the patatin family.

The enzyme catalyses a 1,2-diacyl-sn-glycero-3-phosphocholine + H2O = a 2-acyl-sn-glycero-3-phosphocholine + a fatty acid + H(+). Phospholipase activity is specifically activated upon 3',3'-cUAMP binding. Is not activated by the other cyclic dinucleotides 3',3'-cGAMP, 3',3'-c-diAMP and 3',3'-c-diGMP. Therefore, is specifically activated by only the nucleotide synthesized from its adjacently encoded nucleotidyltransferase (CdnE). Functionally, effector phospholipase of a CBASS antivirus system. CBASS (cyclic oligonucleotide-based antiphage signaling system) provides immunity against bacteriophage. The CD-NTase protein synthesizes cyclic nucleotides in response to infection; these serve as specific second messenger signals. The signals activate a diverse range of effectors, leading to bacterial cell death and thus abortive phage infection. A type II-A(UA) CBASS system. Phospholipase that is activated upon binding to the cyclic dinucleotide (CDN) second messenger 3',3'-cyclic UMP-AMP (3',3'-cUAMP). The polypeptide is cUMP-AMP-activated phospholipase (Escherichia coli).